We begin with the raw amino-acid sequence, 185 residues long: Elongation factor P (185 aa).

This sequence belongs to the elongation factor P family.

The protein localises to the cytoplasm. It functions in the pathway protein biosynthesis; polypeptide chain elongation. Functionally, involved in peptide bond synthesis. Stimulates efficient translation and peptide-bond synthesis on native or reconstituted 70S ribosomes in vitro. Probably functions indirectly by altering the affinity of the ribosome for aminoacyl-tRNA, thus increasing their reactivity as acceptors for peptidyl transferase. The sequence is that of Elongation factor P from Streptococcus equi subsp. zooepidemicus (strain MGCS10565).